A 1305-amino-acid polypeptide reads, in one-letter code: Contactin-associated protein like 5-1 (1305 aa).

An N-terminal signal peptide occupies residues 1–24 (MDSLQRLNGLLTLVLSALWHLGLT). The region spanning 25–174 (ASNYNCDDPL…IGMRVEAYGC (150 aa)) is the F5/8 type C domain. Laminin G-like domains follow at residues 180–360 (VADF…TFSC) and 367–544 (PITF…IDLC). N-linked (GlcNAc...) asparagine glycosylation occurs at Asn-282. The cysteines at positions 329 and 360 are disulfide-linked. Asn-496 carries an N-linked (GlcNAc...) asparagine glycan. Intrachain disulfides connect Cys-512/Cys-544, Cys-550/Cys-561, and Cys-555/Cys-570. The EGF-like 1 domain occupies 546–583 (IKDRCLPNYCEHGGHCAQTWTTFYCNCSDTGYTGATCH). Asn-571 carries an N-linked (GlcNAc...) asparagine glycan. Cys-572 and Cys-582 form a disulfide bridge. The region spanning 584–790 (DSIYEQSCEV…LRCNGDRHFW (207 aa)) is the Fibrinogen C-terminal domain. The N-linked (GlcNAc...) asparagine glycan is linked to Asn-622. A Laminin G-like 3 domain is found at 791-956 (NAVSFSTEAS…KLMSGVTPGC (166 aa)). 4 disulfide bridges follow: Cys-929–Cys-956, Cys-960–Cys-973, Cys-967–Cys-982, and Cys-984–Cys-994. In terms of domain architecture, EGF-like 2 spans 957-995 (PGHCSSYSSNCHNGGKCVEKQSGYSCDCTNSPNEGPFCQ). Positions 1014–1198 (EPYLVIKNTS…VHGTLTESGC (185 aa)) constitute a Laminin G-like 4 domain. Asn-1057 carries an N-linked (GlcNAc...) asparagine glycan. Cys-1163 and Cys-1198 are joined by a disulfide. Residues 1238 to 1258 (VIGGIIAVVTFVTFCVIGIMI) form a helical membrane-spanning segment.

It belongs to the neurexin family.

Its subcellular location is the membrane. Its function is as follows. May play a role in the correct development and proper functioning of the peripheral and central nervous system and be involved in cell adhesion and intercellular communication. This Rattus norvegicus (Rat) protein is Contactin-associated protein like 5-1 (Cntnap5a).